Consider the following 326-residue polypeptide: Aspartate carbamoyltransferase catalytic subunit (326 aa).

Carbamoyl phosphate-binding residues include R58 and T59. K86 contacts L-aspartate. Carbamoyl phosphate-binding residues include R108, H141, and Q144. L-aspartate contacts are provided by R181 and R239. Carbamoyl phosphate contacts are provided by G280 and P281.

This sequence belongs to the aspartate/ornithine carbamoyltransferase superfamily. ATCase family. Heterododecamer (2C3:3R2) of six catalytic PyrB chains organized as two trimers (C3), and six regulatory PyrI chains organized as three dimers (R2).

The catalysed reaction is carbamoyl phosphate + L-aspartate = N-carbamoyl-L-aspartate + phosphate + H(+). It functions in the pathway pyrimidine metabolism; UMP biosynthesis via de novo pathway; (S)-dihydroorotate from bicarbonate: step 2/3. In terms of biological role, catalyzes the condensation of carbamoyl phosphate and aspartate to form carbamoyl aspartate and inorganic phosphate, the committed step in the de novo pyrimidine nucleotide biosynthesis pathway. In Synechococcus sp. (strain JA-2-3B'a(2-13)) (Cyanobacteria bacterium Yellowstone B-Prime), this protein is Aspartate carbamoyltransferase catalytic subunit.